A 316-amino-acid chain; its full sequence is BTB/POZ domain-containing adapter for CUL3-mediated RhoA degradation protein 2 (316 aa).

The BTB domain maps to lysine 28–glutamine 96. Residues glutamate 268–proline 279 are compositionally biased toward polar residues. The interval glutamate 268–glutamate 287 is disordered. At serine 278 the chain carries Phosphoserine. Phosphoserine; by CK2 is present on serine 280.

The protein belongs to the BACURD family. In terms of assembly, component of the BCR(TNFAIP1) E3 ubiquitin ligase complex, at least composed of CUL3, TNFAIP1/BACURD2 and RBX1. Interacts with RHOA; with a preference for RhoA-GDP. Interacts with RHOB. Interacts with PCNA. Interacts with CSNK2B. Phosphorylation at Ser-280 by CK2 facilitates the nucleus localization and increases interaction with PCNA.

It localises to the cytoplasm. Its subcellular location is the nucleus. The protein localises to the endosome. It functions in the pathway protein modification; protein ubiquitination. In terms of biological role, substrate-specific adapter of a BCR (BTB-CUL3-RBX1) E3 ubiquitin-protein ligase complex involved in regulation of cytoskeleton structure. The BCR(TNFAIP1) E3 ubiquitin ligase complex mediates the ubiquitination of RHOA, leading to its degradation by the proteasome, thereby regulating the actin cytoskeleton and cell migration. Its interaction with RHOB may regulate apoptosis. May enhance the PCNA-dependent DNA polymerase delta activity. The chain is BTB/POZ domain-containing adapter for CUL3-mediated RhoA degradation protein 2 (TNFAIP1) from Homo sapiens (Human).